Reading from the N-terminus, the 254-residue chain is Nickel import ATP-binding protein NikD (254 aa).

The region spanning 2 to 241 (PQQIELRNIA…PKHTVTRSLV (240 aa)) is the ABC transporter domain. Residue 36-43 (GGSGSGKS) participates in ATP binding.

It belongs to the ABC transporter superfamily. Nickel importer (TC 3.A.1.5.3) family. In terms of assembly, the complex is composed of two ATP-binding proteins (NikD and NikE), two transmembrane proteins (NikB and NikC) and a solute-binding protein (NikA).

The protein resides in the cell inner membrane. It carries out the reaction Ni(2+)(out) + ATP + H2O = Ni(2+)(in) + ADP + phosphate + H(+). Its function is as follows. Part of the ABC transporter complex NikABCDE involved in nickel import. Responsible for energy coupling to the transport system. The protein is Nickel import ATP-binding protein NikD of Escherichia coli (strain K12).